We begin with the raw amino-acid sequence, 138 residues long: 6,7-dimethyl-8-ribityllumazine synthase (138 aa).

5-amino-6-(D-ribitylamino)uracil contacts are provided by residues Phe-13, 45-47, and 69-71; these read VFD and AVI. 74–75 is a binding site for (2S)-2-hydroxy-3-oxobutyl phosphate; sequence AT. The Proton donor role is filled by His-77. Position 102 (Leu-102) interacts with 5-amino-6-(D-ribitylamino)uracil. Arg-117 is a (2S)-2-hydroxy-3-oxobutyl phosphate binding site.

This sequence belongs to the DMRL synthase family.

The enzyme catalyses (2S)-2-hydroxy-3-oxobutyl phosphate + 5-amino-6-(D-ribitylamino)uracil = 6,7-dimethyl-8-(1-D-ribityl)lumazine + phosphate + 2 H2O + H(+). It functions in the pathway cofactor biosynthesis; riboflavin biosynthesis; riboflavin from 2-hydroxy-3-oxobutyl phosphate and 5-amino-6-(D-ribitylamino)uracil: step 1/2. Functionally, catalyzes the formation of 6,7-dimethyl-8-ribityllumazine by condensation of 5-amino-6-(D-ribitylamino)uracil with 3,4-dihydroxy-2-butanone 4-phosphate. This is the penultimate step in the biosynthesis of riboflavin. The chain is 6,7-dimethyl-8-ribityllumazine synthase from Methanobrevibacter smithii (strain ATCC 35061 / DSM 861 / OCM 144 / PS).